The sequence spans 33 residues: Antimicrobial peptide MBP-1 (33 aa).

In terms of tissue distribution, predominantly in the embryo portion of the kernel.

It localises to the secreted. Functionally, inhibitor of both bacterial and fungal growth in vitro. In Zea mays (Maize), this protein is Antimicrobial peptide MBP-1.